Here is a 542-residue protein sequence, read N- to C-terminus: CTP synthase (542 aa).

The tract at residues 1 to 265 (MARYVFITGG…DSEVLSAFGI (265 aa)) is amidoligase domain. Residue Ser-13 coordinates CTP. Ser-13 serves as a coordination point for UTP. Residue 14-19 (SLGKGI) coordinates ATP. Tyr-54 provides a ligand contact to L-glutamine. Residue Asp-71 coordinates ATP. Mg(2+)-binding residues include Asp-71 and Glu-139. Residues 146–148 (DIE), 186–191 (KTKPTQ), and Lys-222 each bind CTP. Residues 186–191 (KTKPTQ) and Lys-222 contribute to the UTP site. The Glutamine amidotransferase type-1 domain maps to 291 to 541 (TIAIVGKYTG…IEAAIEQSRL (251 aa)). Residue Gly-353 participates in L-glutamine binding. Cys-380 (nucleophile; for glutamine hydrolysis) is an active-site residue. L-glutamine is bound by residues 381–384 (FGMQ), Glu-404, and Arg-469. Catalysis depends on residues His-514 and Glu-516.

Belongs to the CTP synthase family. In terms of assembly, homotetramer.

It carries out the reaction UTP + L-glutamine + ATP + H2O = CTP + L-glutamate + ADP + phosphate + 2 H(+). The catalysed reaction is L-glutamine + H2O = L-glutamate + NH4(+). It catalyses the reaction UTP + NH4(+) + ATP = CTP + ADP + phosphate + 2 H(+). It participates in pyrimidine metabolism; CTP biosynthesis via de novo pathway; CTP from UDP: step 2/2. Its activity is regulated as follows. Allosterically activated by GTP, when glutamine is the substrate; GTP has no effect on the reaction when ammonia is the substrate. The allosteric effector GTP functions by stabilizing the protein conformation that binds the tetrahedral intermediate(s) formed during glutamine hydrolysis. Inhibited by the product CTP, via allosteric rather than competitive inhibition. Functionally, catalyzes the ATP-dependent amination of UTP to CTP with either L-glutamine or ammonia as the source of nitrogen. Regulates intracellular CTP levels through interactions with the four ribonucleotide triphosphates. The protein is CTP synthase of Brucella anthropi (strain ATCC 49188 / DSM 6882 / CCUG 24695 / JCM 21032 / LMG 3331 / NBRC 15819 / NCTC 12168 / Alc 37) (Ochrobactrum anthropi).